The chain runs to 264 residues: tRNA pseudouridine synthase A (264 aa).

Catalysis depends on Asp51, which acts as the Nucleophile. Substrate is bound at residue Tyr109.

The protein belongs to the tRNA pseudouridine synthase TruA family. Homodimer.

It catalyses the reaction uridine(38/39/40) in tRNA = pseudouridine(38/39/40) in tRNA. In terms of biological role, formation of pseudouridine at positions 38, 39 and 40 in the anticodon stem and loop of transfer RNAs. This Pasteurella multocida (strain Pm70) protein is tRNA pseudouridine synthase A.